A 302-amino-acid polypeptide reads, in one-letter code: Lactoylglutathione lyase (302 aa).

VOC domains lie at 11 to 153 and 166 to 301; these read KLNH…LVSQ and RFNH…VIEQ. A Zn(2+)-binding site is contributed by histidine 14. Arginine 18 is a substrate binding site. Glutamate 75 lines the Zn(2+) pocket. Substrate is bound by residues asparagine 79, arginine 99, and histidine 103. The Zn(2+) site is built by histidine 103 and glutamate 149. The Proton donor/acceptor role is filled by glutamate 149.

Belongs to the glyoxalase I family. Monomer. The cofactor is Zn(2+). Cu(2+) serves as cofactor. Requires Ni(2+) as cofactor. Mn(2+) is required as a cofactor.

It carries out the reaction (R)-S-lactoylglutathione = methylglyoxal + glutathione. Its pathway is secondary metabolite metabolism; methylglyoxal degradation; (R)-lactate from methylglyoxal: step 1/2. In terms of biological role, catalyzes the conversion of hemimercaptal, formed from methylglyoxal and glutathione, to S-lactoylglutathione. The polypeptide is Lactoylglutathione lyase (glo1) (Schizosaccharomyces pombe (strain 972 / ATCC 24843) (Fission yeast)).